The following is a 104-amino-acid chain: Large ribosomal subunit protein bL21 (104 aa).

Belongs to the bacterial ribosomal protein bL21 family. In terms of assembly, part of the 50S ribosomal subunit. Contacts protein L20.

Its function is as follows. This protein binds to 23S rRNA in the presence of protein L20. In Lactococcus lactis subsp. cremoris (strain MG1363), this protein is Large ribosomal subunit protein bL21.